The chain runs to 141 residues: Large ribosomal subunit protein bL17 (141 aa).

Belongs to the bacterial ribosomal protein bL17 family. In terms of assembly, part of the 50S ribosomal subunit. Contacts protein L32.

This chain is Large ribosomal subunit protein bL17, found in Sinorhizobium medicae (strain WSM419) (Ensifer medicae).